The following is a 277-amino-acid chain: Caspase-3 (277 aa).

M1 is modified (N-acetylmethionine). Propeptides lie at residues 1–9 (MENTENSVD) and 10–28 (SKSIKNSEPKIIHGSKSVD). Positions 1–10 (MENTENSVDS) are enriched in polar residues. Positions 1 to 25 (MENTENSVDSKSIKNSEPKIIHGSK) are disordered. At K11 the chain carries N6-acetyllysine. Residues 11 to 20 (KSIKNSEPKI) show a composition bias toward basic and acidic residues. S26 is modified (phosphoserine). Catalysis depends on residues H121 and C163. Position 163 is an S-nitrosocysteine; in inhibited form (C163).

It belongs to the peptidase C14A family. As to quaternary structure, heterotetramer that consists of two anti-parallel arranged heterodimers, each one formed by a 17 kDa (p17) and a 12 kDa (p12) subunit. Interacts with BIRC6/bruce. In terms of processing, cleavage by granzyme B, caspase-6, caspase-8 and caspase-10 generates the two active subunits. Additional processing of the propeptides is likely due to the autocatalytic activity of the activated protease. Active heterodimers between the small subunit of caspase-7 protease and the large subunit of caspase-3 also occur and vice versa. S-nitrosylated on its catalytic site cysteine in unstimulated cell lines and denitrosylated upon activation of the Fas apoptotic pathway, associated with an increase in intracellular caspase activity. Fas therefore activates caspase-3 not only by inducing the cleavage of the caspase zymogen to its active subunits, but also by stimulating the denitrosylation of its active site thiol. Post-translationally, ubiquitinated by BIRC6; this activity is inhibited by DIABLO/SMAC.

The protein localises to the cytoplasm. It catalyses the reaction Strict requirement for an Asp residue at positions P1 and P4. It has a preferred cleavage sequence of Asp-Xaa-Xaa-Asp-|- with a hydrophobic amino-acid residue at P2 and a hydrophilic amino-acid residue at P3, although Val or Ala are also accepted at this position.. Inhibited by BIRC6; following inhibition of BIRC6-caspase binding by DIABLO/SMAC, BIRC6 is subjected to caspase cleavage, leading to an increase in active caspases. In terms of biological role, involved in the activation cascade of caspases responsible for apoptosis execution. At the onset of apoptosis, it proteolytically cleaves poly(ADP-ribose) polymerase PARP1 at a '216-Asp-|-Gly-217' bond. Cleaves and activates sterol regulatory element binding proteins (SREBPs) between the basic helix-loop-helix leucine zipper domain and the membrane attachment domain. Cleaves and activates caspase-6, -7 and -9 (CASP6, CASP7 and CASP9, respectively). Cleaves and inactivates interleukin-18 (IL18). Triggers cell adhesion in sympathetic neurons through RET cleavage. Cleaves IL-1 beta between an Asp and an Ala, releasing the mature cytokine which is involved in a variety of inflammatory processes. Cleaves and inhibits serine/threonine-protein kinase AKT1 in response to oxidative stress. Acts as an inhibitor of type I interferon production during virus-induced apoptosis by mediating cleavage of antiviral proteins CGAS, IRF3 and MAVS, thereby preventing cytokine overproduction. Also involved in pyroptosis by mediating cleavage and activation of gasdermin-E (GSDME). Cleaves XRCC4 and phospholipid scramblase proteins XKR4, XKR8 and XKR9, leading to promote phosphatidylserine exposure on apoptotic cell surface. Cleaves BIRC6 following inhibition of BIRC6-caspase binding by DIABLO/SMAC. The protein is Caspase-3 (CASP3) of Saimiri boliviensis boliviensis (Bolivian squirrel monkey).